A 266-amino-acid chain; its full sequence is Gasdermin bGSDM (266 aa).

C4 carries the S-palmitoyl cysteine lipid modification. A run of 4 beta stranded transmembrane segments spans residues 69–85 (INGQKTENLSFSIGINI), 97–114 (AGIEAQYNQARKVRFEFS), 163–180 (EFTVAAEKSGGGSIQLDV), and 189–205 (GKLKVEASVSSQSTVTY). The tract at residues 238-266 (AMALDAAGGVMPSDSALLDEGGLLDLEGF) is C-terminal region.

This sequence belongs to the bacterial gasdermin family. Monomer in solution. In terms of assembly, homooligomer; forms homooligomeric ring-shaped pores when inserted in membranes with 48-54 subunits per ring. Post-translationally, palmitoylation helps stabilize the inactive state; may self palmitoylate. Palmitoylation plays a significant role in pore formation.

The protein resides in the cytoplasm. The protein localises to the cell inner membrane. Its activity is regulated as follows. The full-length protein before cleavage is inactive: intramolecular interactions between the N-terminal domain and the C-terminal region as well as the lipid modification, mediate autoinhibition. The pyroptosis-like-inducing activity is carried by the released N-terminal domain (Gasdermin bGSDM, N-terminus). In terms of biological role, precursor of a pore-forming protein involved in defense against bacteriophages. Expression of bGSDM and the neighboring protease gene (Ga0334635_1659) is toxic in E.coli. Cleavage of this precursor by its dedicated protease releases the active moiety (gasdermin bGSDM, N-terminus) which inserts into membranes, forming pores and triggering cell death. Pore-forming protein that causes membrane permeabilization, probably via a pyroptosis-like activity. Makes ring-like pores with an interior pore diameter of 200-300 Angstroms, when integrated in liposomes. In Vitiosangium sp. (strain GDMCC 1.1324), this protein is Gasdermin bGSDM.